The following is a 218-amino-acid chain: Lipoprotein-releasing system ATP-binding protein LolD (218 aa).

Positions Ile-2 to Asp-218 constitute an ABC transporter domain. Gly-34–Thr-41 lines the ATP pocket.

The protein belongs to the ABC transporter superfamily. Lipoprotein translocase (TC 3.A.1.125) family. The complex is composed of two ATP-binding proteins (LolD) and two transmembrane proteins (LolC and LolE).

The protein localises to the cell inner membrane. Its function is as follows. Part of the ABC transporter complex LolCDE involved in the translocation of mature outer membrane-directed lipoproteins, from the inner membrane to the periplasmic chaperone, LolA. Responsible for the formation of the LolA-lipoprotein complex in an ATP-dependent manner. In Bacteroides thetaiotaomicron (strain ATCC 29148 / DSM 2079 / JCM 5827 / CCUG 10774 / NCTC 10582 / VPI-5482 / E50), this protein is Lipoprotein-releasing system ATP-binding protein LolD.